The following is a 688-amino-acid chain: Glycine--tRNA ligase beta subunit (688 aa).

The protein belongs to the class-II aminoacyl-tRNA synthetase family. In terms of assembly, tetramer of two alpha and two beta subunits.

The protein localises to the cytoplasm. It carries out the reaction tRNA(Gly) + glycine + ATP = glycyl-tRNA(Gly) + AMP + diphosphate. The sequence is that of Glycine--tRNA ligase beta subunit from Psychromonas ingrahamii (strain DSM 17664 / CCUG 51855 / 37).